Here is a 148-residue protein sequence, read N- to C-terminus: Ribonuclease pancreatic (148 aa).

The first 25 residues, 1-25, serve as a signal peptide directing secretion; sequence MGLEKSLILLPLLVLVFGWVQSSLG. Substrate is bound by residues K32 and R35. H36 functions as the Proton acceptor in the catalytic mechanism. Disulfide bonds link C50–C108, C64–C119, C82–C134, and C89–C96. N-linked (GlcNAc...) asparagine glycosylation occurs at N58. 65–69 serves as a coordination point for substrate; the sequence is KPVNT. N-linked (GlcNAc...) asparagine glycosylation is present at N86. Positions 90 and 109 each coordinate substrate. H143 functions as the Proton donor in the catalytic mechanism.

This sequence belongs to the pancreatic ribonuclease family. In terms of assembly, monomer. Interacts with and forms tight 1:1 complexes with RNH1. Dimerization of two such complexes may occur. Interaction with RNH1 inhibits this protein. Pancreas.

It localises to the secreted. The catalysed reaction is an [RNA] containing cytidine + H2O = an [RNA]-3'-cytidine-3'-phosphate + a 5'-hydroxy-ribonucleotide-3'-[RNA].. It carries out the reaction an [RNA] containing uridine + H2O = an [RNA]-3'-uridine-3'-phosphate + a 5'-hydroxy-ribonucleotide-3'-[RNA].. Functionally, endonuclease that catalyzes the cleavage of RNA on the 3' side of pyrimidine nucleotides. Acts on single-stranded and double-stranded RNA. The polypeptide is Ribonuclease pancreatic (RNASE1) (Chionomys nivalis (European snow vole)).